A 92-amino-acid chain; its full sequence is Protein RnfH (92 aa).

This sequence belongs to the UPF0125 (RnfH) family.

The chain is Protein RnfH from Neisseria gonorrhoeae (strain NCCP11945).